Here is a 340-residue protein sequence, read N- to C-terminus: Cytochrome c oxidase subunit 1 (340 aa).

A helical transmembrane segment spans residues 18-38 (MCYLLVAILCGFLGYIYSLFI). The Ca(2+) site is built by Glu-41 and Gly-46. Residues 42 to 62 (LSIIGCGVLFGDYQYYNVLVT) form a helical membrane-spanning segment. His-64 serves as a coordination point for Fe(II)-heme a. 7 helical membrane passes run 66–86 (LVMVFAFIMPVMMGGLVNYFV), 100–120 (LNNMSFWMFMGGFGALVSGLL), 148–168 (FTVFAVHLLGVSSILNSINLL), 186–206 (LFIWGSLITALLLIITLPVLA), 237–257 (LFWFFGHPEVYIIIIPVFGLI), 279–299 (MILIAILGFFVWAHHMFVVGM), and 305–325 (AYFGSVTVLIGLPTCIKLFNW). Residue His-243 coordinates Cu cation. Positions 243 to 247 (HPEVY) form a cross-link, 1'-histidyl-3'-tyrosine (His-Tyr). Position 247 (Tyr-247) interacts with O2. Cu cation is bound by residues His-292 and His-293.

The protein belongs to the heme-copper respiratory oxidase family. As to quaternary structure, component of the cytochrome c oxidase (complex IV, CIV), a multisubunit enzyme composed of a catalytic core of 3 subunits and several supernumerary subunits. The complex exists as a monomer or a dimer and forms supercomplexes (SCs) in the inner mitochondrial membrane with ubiquinol-cytochrome c oxidoreductase (cytochrome b-c1 complex, complex III, CIII). Heme is required as a cofactor. The cofactor is Cu cation.

The protein resides in the mitochondrion inner membrane. It catalyses the reaction 4 Fe(II)-[cytochrome c] + O2 + 8 H(+)(in) = 4 Fe(III)-[cytochrome c] + 2 H2O + 4 H(+)(out). The protein operates within energy metabolism; oxidative phosphorylation. In terms of biological role, component of the cytochrome c oxidase, the last enzyme in the mitochondrial electron transport chain which drives oxidative phosphorylation. The respiratory chain contains 3 multisubunit complexes succinate dehydrogenase (complex II, CII), ubiquinol-cytochrome c oxidoreductase (cytochrome b-c1 complex, complex III, CIII) and cytochrome c oxidase (complex IV, CIV), that cooperate to transfer electrons derived from NADH and succinate to molecular oxygen, creating an electrochemical gradient over the inner membrane that drives transmembrane transport and the ATP synthase. Cytochrome c oxidase is the component of the respiratory chain that catalyzes the reduction of oxygen to water. Electrons originating from reduced cytochrome c in the intermembrane space (IMS) are transferred via the dinuclear copper A center (CU(A)) of subunit 2 and heme A of subunit 1 to the active site in subunit 1, a binuclear center (BNC) formed by heme A3 and copper B (CU(B)). The BNC reduces molecular oxygen to 2 water molecules using 4 electrons from cytochrome c in the IMS and 4 protons from the mitochondrial matrix. The sequence is that of Cytochrome c oxidase subunit 1 (COI) from Strigomonas oncopelti (Parasitic flagellate).